A 235-amino-acid chain; its full sequence is Orotidine 5'-phosphate decarboxylase (235 aa).

Substrate is bound by residues Asp-12, Lys-34, 61–70 (DMKLLDIDNT), Thr-116, Arg-177, Gln-186, Gly-206, and Arg-207. The Proton donor role is filled by Lys-63.

It belongs to the OMP decarboxylase family. Type 1 subfamily. Homodimer.

The enzyme catalyses orotidine 5'-phosphate + H(+) = UMP + CO2. It functions in the pathway pyrimidine metabolism; UMP biosynthesis via de novo pathway; UMP from orotate: step 2/2. In terms of biological role, catalyzes the decarboxylation of orotidine 5'-monophosphate (OMP) to uridine 5'-monophosphate (UMP). This chain is Orotidine 5'-phosphate decarboxylase, found in Rhizobium etli (strain ATCC 51251 / DSM 11541 / JCM 21823 / NBRC 15573 / CFN 42).